The following is a 218-amino-acid chain: Insulin-induced gene 2 protein (218 aa).

The Cytoplasmic portion of the chain corresponds to 1–21 (MGDRENVSYGSRPILAQKMNL). A helical membrane pass occupies residues 22-44 (LLRGFLLFLIGVFLALVLNLLQV). Over 45-63 (QRNVTLFPPDVLSSLFSSA) the chain is Lumenal. A helical transmembrane segment spans residues 64–81 (WWVPLCCGTAAAAIGLLY). Topologically, residues 82–96 (PCIDRHLGEPHKFKR) are cytoplasmic. The chain crosses the membrane as a helical span at residues 97 to 119 (EWSSVMRCVAVFVGINHASAKVD). The Lumenal segment spans residues 120 to 122 (FAN). A helical transmembrane segment spans residues 123 to 141 (NMQLSLTLAALSIGLWWTF). The Cytoplasmic portion of the chain corresponds to 142–146 (DRSRS). Residues 147 to 168 (GLGLGIGISFFATLVSQLLVYN) traverse the membrane as a helical segment. The Lumenal segment spans residues 169-182 (GVYEYTAPDFLYVR). A helical membrane pass occupies residues 183 to 200 (SWLPCIFFAGGITMGNIG). Over 201-218 (RQLEMYERKALVEKSHRD) the chain is Cytoplasmic. Positions 212–218 (VEKSHRD) match the KxHxx motif.

This sequence belongs to the INSIG family. Interacts with scap; interaction is direct and only takes place in the presence of sterols; it prevents interaction between scap and the coat protein complex II (COPII). Associates with the SCAP-SREBP complex; association is mediated via its interaction with scap and only takes place in the presence of sterols.

It localises to the endoplasmic reticulum membrane. In terms of biological role, oxysterol-binding protein that mediates feedback control of cholesterol synthesis by controlling both endoplasmic reticulum to Golgi transport of scap and degradation of hmgcr. Acts as a negative regulator of cholesterol biosynthesis by mediating the retention of the SCAP-SREBP complex in the endoplasmic reticulum, thereby blocking the processing of sterol regulatory element-binding proteins (SREBPs). Binds oxysterol, including 22-hydroxycholesterol, 24-hydroxycholesterol, 25-hydroxycholesterol and 27-hydroxycholesterol, regulating interaction with scap and retention of the SCAP-SREBP complex in the endoplasmic reticulum. In presence of oxysterol, interacts with scap, retaining the SCAP-SREBP complex in the endoplasmic reticulum, thereby preventing scap from escorting SREBPs to the Golgi. Sterol deprivation reduce oxysterol-binding, disrupting the interaction between insig2 and scap, thereby promoting Golgi transport of the SCAP-SREBP complex, followed by processing and nuclear translocation of SREBPs. Also regulates cholesterol synthesis by regulating degradation of hmgcr. This chain is Insulin-induced gene 2 protein, found in Xenopus laevis (African clawed frog).